Consider the following 102-residue polypeptide: NADH-quinone oxidoreductase subunit K (102 aa).

3 consecutive transmembrane segments (helical) span residues 6–26 (MHHG…GILV), 30–50 (LIFI…AFVV), and 64–84 (FIFI…LLLL).

This sequence belongs to the complex I subunit 4L family. NDH-1 is composed of 14 different subunits. Subunits NuoA, H, J, K, L, M, N constitute the membrane sector of the complex.

Its subcellular location is the cell inner membrane. The catalysed reaction is a quinone + NADH + 5 H(+)(in) = a quinol + NAD(+) + 4 H(+)(out). NDH-1 shuttles electrons from NADH, via FMN and iron-sulfur (Fe-S) centers, to quinones in the respiratory chain. The immediate electron acceptor for the enzyme in this species is believed to be ubiquinone. Couples the redox reaction to proton translocation (for every two electrons transferred, four hydrogen ions are translocated across the cytoplasmic membrane), and thus conserves the redox energy in a proton gradient. This is NADH-quinone oxidoreductase subunit K from Nitrosospira multiformis (strain ATCC 25196 / NCIMB 11849 / C 71).